Reading from the N-terminus, the 479-residue chain is Glucagon receptor (479 aa).

The first 25 residues, 1–25, serve as a signal peptide directing secretion; that stretch reads MPPARLRHPHLLLLLLLACQPQAPA. Residues 26-136 are Extracellular-facing; it reads AQAMDFLFQK…ELGVQREVAE (111 aa). 3 cysteine pairs are disulfide-bonded: cysteine 43–cysteine 67, cysteine 58–cysteine 100, and cysteine 81–cysteine 121. Residues asparagine 46, asparagine 59, asparagine 74, asparagine 78, and asparagine 117 are each glycosylated (N-linked (GlcNAc...) asparagine). Residues 137–161 form a helical membrane-spanning segment; the sequence is MYSSFQAMYTAGYSLSLAALLLALA. Residues 162–173 are Cytoplasmic-facing; that stretch reads ILLGLSKLHCTR. Residues 174–198 traverse the membrane as a helical segment; sequence NYIHANLLASFVLRASSVLALDALL. The Extracellular segment spans residues 199–225; the sequence is KTRYSQRLGDDLSVSIWLSDEAVAGCR. A disulfide bond links cysteine 224 and cysteine 294. The chain crosses the membrane as a helical span at residues 226–249; sequence VAAVFMQYGVVANYCWLLVEGVYL. The Cytoplasmic segment spans residues 250 to 263; that stretch reads HSLLRQATIPERSC. Residues 264-285 form a helical membrane-spanning segment; the sequence is FPLYLAIGWGAPMLFVIPWAVV. Over 286–303 the chain is Extracellular; sequence KCLFENIQCWTSNDNMGF. The chain crosses the membrane as a helical span at residues 304-326; it reads WWILRFPVFLAILINFSIFIRVL. The Cytoplasmic segment spans residues 327–350; the sequence is HVLVAKLRAHQMRCTDYKFRLARS. A helical membrane pass occupies residues 351–369; sequence TLTLIPLLGVHEVVFAFVT. At 370–381 the chain is on the extracellular side; the sequence is DEHAQGALRSAK. Residues 382-402 form a helical membrane-spanning segment; the sequence is LFFDLFLSSFQGLLVAVLYCF. The Cytoplasmic segment spans residues 403–479; the sequence is LNKEVQAELL…GLPGVAENPF (77 aa). The tract at residues 426 to 479 is disordered; sequence KAHRVGSHSARPPSGPPSEKLLLSTGGSSNGTSQEPSAETHLASGLPGVAENPF. Residues 446–458 show a composition bias toward low complexity; the sequence is LLLSTGGSSNGTS. Position 458 is a phosphoserine (serine 458).

Belongs to the G-protein coupled receptor 2 family. In terms of processing, ligand-binding promotes phosphorylation of serine residues in the C-terminal cytoplasmic domain. Phosphorylation is important for receptor endocytosis after ligand-binding.

Its subcellular location is the cell membrane. Its function is as follows. G-protein coupled receptor for glucagon that plays a central role in the regulation of blood glucose levels and glucose homeostasis. Regulates the rate of hepatic glucose production by promoting glycogen hydrolysis and gluconeogenesis. Plays an important role in mediating the responses to fasting. Ligand binding causes a conformation change that triggers signaling via guanine nucleotide-binding proteins (G proteins) and modulates the activity of down-stream effectors, such as adenylate cyclase. Promotes activation of adenylate cyclase. Besides, plays a role in signaling via a phosphatidylinositol-calcium second messenger system. This Sus scrofa (Pig) protein is Glucagon receptor.